The following is a 197-amino-acid chain: NADH-quinone oxidoreductase subunit C (197 aa).

Belongs to the complex I 30 kDa subunit family. As to quaternary structure, NDH-1 is composed of 14 different subunits. Subunits NuoB, C, D, E, F, and G constitute the peripheral sector of the complex.

It is found in the cell inner membrane. It catalyses the reaction a quinone + NADH + 5 H(+)(in) = a quinol + NAD(+) + 4 H(+)(out). In terms of biological role, NDH-1 shuttles electrons from NADH, via FMN and iron-sulfur (Fe-S) centers, to quinones in the respiratory chain. The immediate electron acceptor for the enzyme in this species is believed to be ubiquinone. Couples the redox reaction to proton translocation (for every two electrons transferred, four hydrogen ions are translocated across the cytoplasmic membrane), and thus conserves the redox energy in a proton gradient. The protein is NADH-quinone oxidoreductase subunit C of Neisseria meningitidis serogroup C (strain 053442).